The following is a 465-amino-acid chain: Lysosomal dipeptide transporter MFSD1 (465 aa).

Positions 1 to 23 (MEEEDEEARALLAGGPDEADRGA) are disordered. Positions 11–12 (LL) match the Dileucine internalization motif motif. The next 12 membrane-spanning stretches (helical) occupy residues 39–59 (LVHR…SYFC), 83–103 (LLYA…GFLI), 113–133 (TIIF…GGIF), 135–155 (AFWL…SLAV), 170–191 (LNLV…NMNL), 213–233 (ITLM…LALA), 266–286 (LWLI…FIGL), 304–324 (AINS…GLLV), 331–351 (IIWV…LAFT), 361–381 (LLGL…AFVV), 392–412 (FMQS…GMIL), and 418–438 (LFLE…VVLL).

This sequence belongs to the major facilitator superfamily. Homodimer. Interacts with lysosomal protein GLMP (via lumenal domain); the interaction starts while both proteins are still in the endoplasmic reticulum and is required for stabilization of MFSD1 in lysosomes but has no direct effect on its targeting to lysosomes or transporter activity.

It is found in the lysosome membrane. The catalysed reaction is L-alpha-aminoacyl-L-arginine(out) = L-alpha-aminoacyl-L-arginine(in). It catalyses the reaction L-arginyl-L-alpha-amino acid(out) = L-arginyl-L-alpha-amino acid(in). The enzyme catalyses L-arginyl-glycine(out) = L-arginyl-glycine(in). It carries out the reaction L-alpha-aminoacyl-L-lysine(out) = L-alpha-aminoacyl-L-lysine(in). The catalysed reaction is L-aspartyl-L-lysine(out) = L-aspartyl-L-lysine(in). It catalyses the reaction L-alanyl-L-lysine(out) = L-alanyl-L-lysine(in). The enzyme catalyses L-lysyl-L-alpha-amino acid(out) = L-lysyl-L-alpha-amino acid(in). It carries out the reaction L-lysyl-L-alanine(out) = L-lysyl-L-alanine(in). The catalysed reaction is L-lysyl-L-lysine(out) = L-lysyl-L-lysine(in). It catalyses the reaction L-lysyl-glycine(out) = L-lysyl-glycine(in). The enzyme catalyses L-alpha-aminoacyl-L-histidine(out) = L-alpha-aminoacyl-L-histidine(in). It carries out the reaction L-histidyl-L-alpha-amino acid(out) = L-histidyl-L-alpha-amino acid(in). The catalysed reaction is L-histidyl-glycine(out) = L-histidyl-glycine(in). Its function is as follows. Lysosomal dipeptide uniporter that selectively exports lysine, arginine or histidine-containing dipeptides with a net positive charge from the lysosome lumen into the cytosol. Could play a role in a specific type of protein O-glycosylation indirectly regulating macrophages migration and tissue invasion. Also essential for liver homeostasis. In Pongo abelii (Sumatran orangutan), this protein is Lysosomal dipeptide transporter MFSD1.